The following is a 155-amino-acid chain: Putative pre-16S rRNA nuclease (155 aa).

This sequence belongs to the YqgF nuclease family.

The protein resides in the cytoplasm. Functionally, could be a nuclease involved in processing of the 5'-end of pre-16S rRNA. The polypeptide is Putative pre-16S rRNA nuclease (Xanthomonas campestris pv. campestris (strain 8004)).